The sequence spans 148 residues: Deoxyuridine 5'-triphosphate nucleotidohydrolase (148 aa).

Residues 67-69, Asn80, 84-86, and Met94 each bind substrate; these read RSG and LID.

Belongs to the dUTPase family. Mg(2+) is required as a cofactor.

The enzyme catalyses dUTP + H2O = dUMP + diphosphate + H(+). Its pathway is pyrimidine metabolism; dUMP biosynthesis; dUMP from dCTP (dUTP route): step 2/2. In terms of biological role, this enzyme is involved in nucleotide metabolism: it produces dUMP, the immediate precursor of thymidine nucleotides and it decreases the intracellular concentration of dUTP so that uracil cannot be incorporated into DNA. In Ralstonia pickettii (strain 12J), this protein is Deoxyuridine 5'-triphosphate nucleotidohydrolase.